Consider the following 847-residue polypeptide: Pep5-like zinc finger protein C16A10.03c (847 aa).

Residues 387 to 526 (YIEAIPFSDS…GIWLFNSDPM (140 aa)) form a CHCR repeat. The RING-type; atypical zinc finger occupies 780-814 (CDNCEGLLDVPFVSYSCLHLVHRDCATETVCPKCK).

It localises to the cytoplasm. The protein localises to the nucleus. This Schizosaccharomyces pombe (strain 972 / ATCC 24843) (Fission yeast) protein is Pep5-like zinc finger protein C16A10.03c.